The following is a 274-amino-acid chain: 3-methyl-2-oxobutanoate hydroxymethyltransferase (274 aa).

The Mg(2+) site is built by Asp44 and Asp83. 3-methyl-2-oxobutanoate contacts are provided by residues Asp44–Ser45, Asp83, and Lys113. Glu115 is a binding site for Mg(2+). Glu182 serves as the catalytic Proton acceptor.

This sequence belongs to the PanB family. Homodecamer; pentamer of dimers. Requires Mg(2+) as cofactor.

It localises to the cytoplasm. It catalyses the reaction 3-methyl-2-oxobutanoate + (6R)-5,10-methylene-5,6,7,8-tetrahydrofolate + H2O = 2-dehydropantoate + (6S)-5,6,7,8-tetrahydrofolate. It participates in cofactor biosynthesis; (R)-pantothenate biosynthesis; (R)-pantoate from 3-methyl-2-oxobutanoate: step 1/2. Catalyzes the reversible reaction in which hydroxymethyl group from 5,10-methylenetetrahydrofolate is transferred onto alpha-ketoisovalerate to form ketopantoate. This chain is 3-methyl-2-oxobutanoate hydroxymethyltransferase, found in Campylobacter jejuni subsp. doylei (strain ATCC BAA-1458 / RM4099 / 269.97).